Here is a 747-residue protein sequence, read N- to C-terminus: Cysteine--tRNA ligase, cytoplasmic (747 aa).

The segment at 1 to 25 (MTDSWERGKGRRTQPPWSAPNTQAQ) is disordered. Polar residues predominate over residues 15–25 (PPWSAPNTQAQ). Cys54 serves as a coordination point for Zn(2+). Gly55 serves as a coordination point for L-cysteine. The 'HIGH' region signature appears at 56-66 (PTVYDASHMGH). Thr95 contacts L-cysteine. Positions 100 to 103 (KIIK) match the 'KIIK' region motif. Residues Cys347, His372, and Glu376 each coordinate Zn(2+). His372 serves as a coordination point for L-cysteine. Residues 405–409 (KMSKS) carry the 'KMSKS' region motif. An ATP-binding site is contributed by Lys408. Over residues 651 to 683 (EEKRKAEEEKQRKKEEAARKKQQQEAAKLEKMK) the composition is skewed to basic and acidic residues. The interval 651 to 722 (EEKRKAEEEK…KELSKGQSKK (72 aa)) is disordered.

This sequence belongs to the class-I aminoacyl-tRNA synthetase family. As to quaternary structure, homodimer. Zn(2+) serves as cofactor.

It is found in the cytoplasm. The enzyme catalyses tRNA(Cys) + L-cysteine + ATP = L-cysteinyl-tRNA(Cys) + AMP + diphosphate. Catalyzes the ATP-dependent ligation of cysteine to tRNA(Cys). In Xenopus tropicalis (Western clawed frog), this protein is Cysteine--tRNA ligase, cytoplasmic (cars1).